Reading from the N-terminus, the 285-residue chain is 4-hydroxybenzoate octaprenyltransferase (285 aa).

A run of 7 helical transmembrane segments spans residues 20 to 39 (GSYL…AQGL), 92 to 112 (ALGL…ALNW), 137 to 157 (FPQV…FMAV), 159 to 179 (EAVP…TVAY), 206 to 226 (YDRL…LGMG), 228 to 248 (YLGF…LFIH), and 260 to 280 (ACFS…LGIA).

This sequence belongs to the UbiA prenyltransferase family. It depends on Mg(2+) as a cofactor.

It localises to the cell inner membrane. It carries out the reaction all-trans-octaprenyl diphosphate + 4-hydroxybenzoate = 4-hydroxy-3-(all-trans-octaprenyl)benzoate + diphosphate. Its pathway is cofactor biosynthesis; ubiquinone biosynthesis. Functionally, catalyzes the prenylation of para-hydroxybenzoate (PHB) with an all-trans polyprenyl group. Mediates the second step in the final reaction sequence of ubiquinone-8 (UQ-8) biosynthesis, which is the condensation of the polyisoprenoid side chain with PHB, generating the first membrane-bound Q intermediate 3-octaprenyl-4-hydroxybenzoate. The chain is 4-hydroxybenzoate octaprenyltransferase from Pseudoalteromonas atlantica (strain T6c / ATCC BAA-1087).